The primary structure comprises 118 residues: Ribonuclease P protein component (118 aa).

It belongs to the RnpA family. In terms of assembly, consists of a catalytic RNA component (M1 or rnpB) and a protein subunit.

It carries out the reaction Endonucleolytic cleavage of RNA, removing 5'-extranucleotides from tRNA precursor.. In terms of biological role, RNaseP catalyzes the removal of the 5'-leader sequence from pre-tRNA to produce the mature 5'-terminus. It can also cleave other RNA substrates such as 4.5S RNA. The protein component plays an auxiliary but essential role in vivo by binding to the 5'-leader sequence and broadening the substrate specificity of the ribozyme. The sequence is that of Ribonuclease P protein component from Vibrio campbellii (strain ATCC BAA-1116).